We begin with the raw amino-acid sequence, 1100 residues long: Serine/threonine/tyrosine-interacting-like protein 2 (1100 aa).

Residues 1–12 show a composition bias toward polar residues; sequence MASSVEDQQLQQ. The interval 1-21 is disordered; sequence MASSVEDQQLQQEEAESVKDV. The 149-residue stretch at 141 to 289 folds into the Tyrosine-protein phosphatase domain; the sequence is SPVDEVWPNV…LRQLNETLME (149 aa). The span at 356–374 shows a compositional bias: polar residues; the sequence is CGSQQPNMQQPADQPSLPG. 8 disordered regions span residues 356 to 383, 411 to 436, 479 to 504, 542 to 561, 575 to 615, 667 to 686, 888 to 1060, and 1075 to 1100; these read CGSQQPNMQQPADQPSLPGQTREDEDGD, EDEDDGEDKTQRAVRPDDLESVTSED, AAARHRLQDQDTSSETQQKKIDDDVQ, KENAENGEQSEAEPAAAPDL, KQQK…ERSR, VLSGRSTRSLPPAVLETPAP, CEKP…DEEI, and VAEEMEDDEVLTAWRKQEESKSHDHK. The segment covering 418 to 428 has biased composition (basic and acidic residues); that stretch reads DKTQRAVRPDD. Residues 580–615 are compositionally biased toward basic and acidic residues; that stretch reads HGGEENKEEILQMSRGEDTATARRRQRREEVLERSR. Residues 667 to 676 are compositionally biased toward low complexity; it reads VLSGRSTRSL. Residues 888 to 898 are compositionally biased toward basic and acidic residues; it reads CEKPKPKRDYG. Composition is skewed to polar residues over residues 907–916, 994–1013, and 1029–1041; these read ASANNPTSSI, SYSSRRSPSFNGLSESTSFA, and FQNHSIKQKSSVY. Over residues 1089-1100 the composition is skewed to basic and acidic residues; it reads RKQEESKSHDHK.

The protein belongs to the protein-tyrosine phosphatase family. Non-receptor class dual specificity subfamily. As to expression, expressed in muscle fibers in a regular striated pattern (at protein level).

The protein resides in the cytoplasm. It localises to the myofibril. Its subcellular location is the sarcomere. Its function is as follows. Required for myofiber maturation. The protein is Serine/threonine/tyrosine-interacting-like protein 2 (styxl2) of Danio rerio (Zebrafish).